The primary structure comprises 616 residues: Dihydroxy-acid dehydratase (616 aa).

Aspartate 81 serves as a coordination point for Mg(2+). Cysteine 122 contributes to the [2Fe-2S] cluster binding site. Aspartate 123 and lysine 124 together coordinate Mg(2+). Lysine 124 is subject to N6-carboxylysine. Residue cysteine 195 coordinates [2Fe-2S] cluster. Glutamate 491 lines the Mg(2+) pocket. Residue serine 517 is the Proton acceptor of the active site.

The protein belongs to the IlvD/Edd family. In terms of assembly, homodimer. The cofactor is [2Fe-2S] cluster. Requires Mg(2+) as cofactor.

The enzyme catalyses (2R)-2,3-dihydroxy-3-methylbutanoate = 3-methyl-2-oxobutanoate + H2O. It catalyses the reaction (2R,3R)-2,3-dihydroxy-3-methylpentanoate = (S)-3-methyl-2-oxopentanoate + H2O. The protein operates within amino-acid biosynthesis; L-isoleucine biosynthesis; L-isoleucine from 2-oxobutanoate: step 3/4. Its pathway is amino-acid biosynthesis; L-valine biosynthesis; L-valine from pyruvate: step 3/4. Functionally, functions in the biosynthesis of branched-chain amino acids. Catalyzes the dehydration of (2R,3R)-2,3-dihydroxy-3-methylpentanoate (2,3-dihydroxy-3-methylvalerate) into 2-oxo-3-methylpentanoate (2-oxo-3-methylvalerate) and of (2R)-2,3-dihydroxy-3-methylbutanoate (2,3-dihydroxyisovalerate) into 2-oxo-3-methylbutanoate (2-oxoisovalerate), the penultimate precursor to L-isoleucine and L-valine, respectively. This is Dihydroxy-acid dehydratase from Yersinia enterocolitica serotype O:8 / biotype 1B (strain NCTC 13174 / 8081).